The primary structure comprises 319 residues: Acetyl esterase (319 aa).

The Involved in the stabilization of the negatively charged intermediate by the formation of the oxyanion hole motif lies at 91–93 (HGG). Catalysis depends on residues Ser165, Asp262, and His292.

Belongs to the 'GDXG' lipolytic enzyme family. Homodimer. Interacts with MalT and MelA.

It localises to the cytoplasm. In terms of biological role, displays esterase activity towards short chain fatty esters (acyl chain length of up to 8 carbons). Able to hydrolyze triacetylglycerol (triacetin) and tributyrylglycerol (tributyrin), but not trioleylglycerol (triolein) or cholesterol oleate. Negatively regulates MalT activity by antagonizing maltotriose binding. Inhibits MelA galactosidase activity. In Escherichia coli O81 (strain ED1a), this protein is Acetyl esterase.